The following is a 232-amino-acid chain: Ribonuclease HII (232 aa).

In terms of domain architecture, RNase H type-2 spans 26-218 (RILCGVDEAG…VRRALEGMSA (193 aa)). Asp32, Glu33, and Asp127 together coordinate a divalent metal cation.

It belongs to the RNase HII family. It depends on Mn(2+) as a cofactor. Requires Mg(2+) as cofactor.

It localises to the cytoplasm. It catalyses the reaction Endonucleolytic cleavage to 5'-phosphomonoester.. Endonuclease that specifically degrades the RNA of RNA-DNA hybrids. This Ralstonia pickettii (strain 12J) protein is Ribonuclease HII.